Here is a 61-residue protein sequence, read N- to C-terminus: Small ribosomal subunit protein uS14 (61 aa).

Residues Cys-24, Cys-27, Cys-40, and Cys-43 each coordinate Zn(2+).

Belongs to the universal ribosomal protein uS14 family. Zinc-binding uS14 subfamily. In terms of assembly, part of the 30S ribosomal subunit. Contacts proteins S3 and S10. Requires Zn(2+) as cofactor.

Its function is as follows. Binds 16S rRNA, required for the assembly of 30S particles and may also be responsible for determining the conformation of the 16S rRNA at the A site. This Thermobifida fusca (strain YX) protein is Small ribosomal subunit protein uS14.